The chain runs to 280 residues: Energy-coupling factor transporter ATP-binding protein EcfA1 (280 aa).

One can recognise an ABC transporter domain in the interval 6–241; that stretch reads LRTENISFQY…SHMLQEIGLD (236 aa). Position 40–47 (40–47) interacts with ATP; that stretch reads GQNGSGKS.

The protein belongs to the ABC transporter superfamily. Energy-coupling factor EcfA family. In terms of assembly, forms a stable energy-coupling factor (ECF) transporter complex composed of 2 membrane-embedded substrate-binding proteins (S component), 2 ATP-binding proteins (A component) and 2 transmembrane proteins (T component).

It localises to the cell membrane. Its function is as follows. ATP-binding (A) component of a common energy-coupling factor (ECF) ABC-transporter complex. Unlike classic ABC transporters this ECF transporter provides the energy necessary to transport a number of different substrates. This chain is Energy-coupling factor transporter ATP-binding protein EcfA1, found in Bacillus cereus (strain ATCC 10987 / NRS 248).